The following is a 61-amino-acid chain: Protein translocase subunit SecE (61 aa).

Residues 1 to 34 lie on the Cytoplasmic side of the membrane; sequence MAELQERIRHFWKESRRAFLVTKKPNWATYKRAA. A helical membrane pass occupies residues 35-55; it reads KITGLGIILIGLIGMLIRIVG. The Extracellular segment spans residues 56-61; the sequence is ILILGG.

Belongs to the SecE/SEC61-gamma family. Component of the Sec protein translocase complex. Heterotrimer consisting of alpha (SecY), beta (SecG) and gamma (SecE) subunits. The heterotrimers can form oligomers, although 1 heterotrimer is thought to be able to translocate proteins. Interacts with the ribosome. May interact with SecDF, and other proteins may be involved.

Its subcellular location is the cell membrane. In terms of biological role, essential subunit of the protein translocation channel SecYEG. Clamps together the 2 halves of SecY. May contact the channel plug during translocation. The sequence is that of Protein translocase subunit SecE from Pyrococcus furiosus (strain ATCC 43587 / DSM 3638 / JCM 8422 / Vc1).